A 139-amino-acid chain; its full sequence is Transcription factor E (139 aa).

The region spanning 7–91 is the HTH TFE/IIEalpha-type domain; the sequence is IINKKQDEVS…DYEKILDTLL (85 aa).

This sequence belongs to the TFE family. As to quaternary structure, monomer. Interaction with RNA polymerase subunits RpoF and RpoE is necessary for Tfe stimulatory transcription activity. Able to interact with Tbp and RNA polymerase in the absence of DNA promoter. Interacts both with the preinitiation and elongation complexes.

Functionally, transcription factor that plays a role in the activation of archaeal genes transcribed by RNA polymerase. Facilitates transcription initiation by enhancing TATA-box recognition by TATA-box-binding protein (Tbp), and transcription factor B (Tfb) and RNA polymerase recruitment. Not absolutely required for transcription in vitro, but particularly important in cases where Tbp or Tfb function is not optimal. It dynamically alters the nucleic acid-binding properties of RNA polymerases by stabilizing the initiation complex and destabilizing elongation complexes. Seems to translocate with the RNA polymerase following initiation and acts by binding to the non template strand of the transcription bubble in elongation complexes. This chain is Transcription factor E, found in Nanoarchaeum equitans (strain Kin4-M).